The primary structure comprises 171 residues: MPRVGIIMGSDSDLPVMKQAAEILEEFGIDYEITIVSAHRTPDRMFEYAKNAEERGIEVIIAGAGGAAHLPGMVASITHLPVIGVPVKTSTLNGLDSLFSIVQMPGGVPVATVAINNAKNAGILAASILGIKYPEIARKVKEYKERMKREVLEKAQRLEQIGYKEYLNQKE.

Residues Ser-10, Asp-13, and Arg-40 each contribute to the substrate site.

The protein belongs to the AIR carboxylase family. Class I subfamily.

It carries out the reaction 5-carboxyamino-1-(5-phospho-D-ribosyl)imidazole + H(+) = 5-amino-1-(5-phospho-D-ribosyl)imidazole-4-carboxylate. It functions in the pathway purine metabolism; IMP biosynthesis via de novo pathway; 5-amino-1-(5-phospho-D-ribosyl)imidazole-4-carboxylate from 5-amino-1-(5-phospho-D-ribosyl)imidazole (N5-CAIR route): step 2/2. Its function is as follows. Catalyzes the conversion of N5-carboxyaminoimidazole ribonucleotide (N5-CAIR) to 4-carboxy-5-aminoimidazole ribonucleotide (CAIR). The sequence is that of N5-carboxyaminoimidazole ribonucleotide mutase from Thermotoga maritima (strain ATCC 43589 / DSM 3109 / JCM 10099 / NBRC 100826 / MSB8).